We begin with the raw amino-acid sequence, 247 residues long: Probable phosphatase swp_1620 (247 aa).

Histidine 8, histidine 10, histidine 16, histidine 41, glutamate 74, histidine 102, histidine 132, aspartate 193, and histidine 195 together coordinate Zn(2+).

Belongs to the PHP family. The cofactor is Zn(2+).

In Shewanella piezotolerans (strain WP3 / JCM 13877), this protein is Probable phosphatase swp_1620.